The sequence spans 485 residues: AP2-like ethylene-responsive transcription factor TOE2 (485 aa).

Gly residues predominate over residues 124–135 (GDFIGSGSGGGD). The tract at residues 124–161 (GDFIGSGSGGGDASRVMQPPSQPVKKSRRGPRSKSSQY) is disordered. The AP2/ERF DNA-binding region spans 160 to 216 (QYRGVTFYRRTGRWESHIWDCGKQVYLGGFDTAHAAARAYDRAAVKFRGLEADINFV).

It belongs to the AP2/ERF transcription factor family. AP2 subfamily.

Its subcellular location is the nucleus. Probably acts as a transcriptional activator. Binds to the GCC-box pathogenesis-related promoter element. May be involved in the regulation of gene expression by stress factors and by components of stress signal transduction pathways. Regulates negatively the transition to flowering time and confers flowering time delay. The polypeptide is AP2-like ethylene-responsive transcription factor TOE2 (TOE2) (Arabidopsis thaliana (Mouse-ear cress)).